A 207-amino-acid chain; its full sequence is Large ribosomal subunit protein uL4 (207 aa).

The disordered stretch occupies residues 52-76 (KNTSLVSGGGKKPWKQKGTGRARQG).

Belongs to the universal ribosomal protein uL4 family. Part of the 50S ribosomal subunit.

In terms of biological role, one of the primary rRNA binding proteins, this protein initially binds near the 5'-end of the 23S rRNA. It is important during the early stages of 50S assembly. It makes multiple contacts with different domains of the 23S rRNA in the assembled 50S subunit and ribosome. Forms part of the polypeptide exit tunnel. In Myxococcus xanthus (strain DK1622), this protein is Large ribosomal subunit protein uL4.